Consider the following 406-residue polypeptide: MRRTVITGFGIISSIGNNKEEVLASLKAGKSGIEVVPEFVEMNMRSHVAGTIKLNPSEHIDRKVFRFMGDAAAYAYLSMREAIEDAGLTEDQVSNDRTGLVIGAGTGSAHNQLVACDAVRGPRGVKAIGPYAVTKTMASSVSACLATPYKIRGVNYSMSSACATSAHCIGHAVELIQLGKQDVVFAGGAEELSWECATEFDAMGAVSTKYNETPEKASRAYDANRDGFVIAGGGAVVVVEELEHALARGAKIYAEIVGYGATSDGYDMVAPSGEGAERCMKQAMATVDTPIDYINVHGTSTPVGDVKELGAIKNVFGDKIPAISSTKSMTGHSLGAAGAHEAIYTLLMLDNDFIAPSINIETLDEAAEGCNIVTETKENAGLQTVMSNSFGFGGTNATLIFKRYNG.

The region spanning 1 to 403 (MRRTVITGFG…GTNATLIFKR (403 aa)) is the Ketosynthase family 3 (KS3) domain. Catalysis depends on for beta-ketoacyl synthase activity residues cysteine 162, histidine 297, and histidine 332.

This sequence belongs to the thiolase-like superfamily. Beta-ketoacyl-ACP synthases family. As to quaternary structure, homodimer.

It localises to the cytoplasm. It carries out the reaction a fatty acyl-[ACP] + malonyl-[ACP] + H(+) = a 3-oxoacyl-[ACP] + holo-[ACP] + CO2. The catalysed reaction is (3Z)-decenoyl-[ACP] + malonyl-[ACP] + H(+) = 3-oxo-(5Z)-dodecenoyl-[ACP] + holo-[ACP] + CO2. It functions in the pathway lipid metabolism; fatty acid biosynthesis. In terms of biological role, involved in the type II fatty acid elongation cycle. Catalyzes the elongation of a wide range of acyl-ACP by the addition of two carbons from malonyl-ACP to an acyl acceptor. Can also use unsaturated fatty acids. Catalyzes a key reaction in unsaturated fatty acid (UFA) synthesis, the elongation of the cis-3-decenoyl-ACP produced by FabA. This is 3-oxoacyl-[acyl-carrier-protein] synthase 1 (fabB) from Haemophilus influenzae (strain ATCC 51907 / DSM 11121 / KW20 / Rd).